Here is a 933-residue protein sequence, read N- to C-terminus: Progesterone receptor (933 aa).

Residues 1–164 are AF3; mediates transcriptional activation; that stretch reads MTELKAKGPR…PATQGVLSPL (164 aa). Residues 1 to 256 are disordered; sequence MTELKAKGPR…AAAGGGAAAV (256 aa). The tract at residues 1–566 is modulating, Pro-Rich; that stretch reads MTELKAKGPR…YSFESLPQKI (566 aa). Residue serine 20 is modified to Phosphoserine. The LXXL motif 1 motif lies at 55–59; that stretch reads LDGLL. Serine 81 is modified (phosphoserine). The short motif at 115–119 is the LXXL motif 2 element; the sequence is LETLL. A phosphoserine mark is found at serine 130 and serine 162. Residues 165–305 form a mediates transcriptional transrepression region; it reads MSRSGGKAGD…LATTVMDFIH (141 aa). The Nuclear localization signal signature appears at 183–187; the sequence is KVLPR. 2 positions are modified to phosphoserine: serine 190 and serine 213. The segment covering 220–231 has biased composition (acidic residues); that stretch reads EVEEEDGSESEE. The span at 232–246 shows a compositional bias: low complexity; that stretch reads SAGPLLKGKPRALGG. Position 294 is a phosphoserine; by MAPK1 (serine 294). A disordered region spans residues 331 to 378; it reads GGAGAASAFAPPRSSPSASSTPVAVGDFPDCAYPPDAEPKDDAYPLYS. The segment covering 335–350 has biased composition (low complexity); sequence AASAFAPPRSSPSASS. Serine 345 is subject to Phosphoserine; by MAPK. Lysine 388 is covalently cross-linked (Glycyl lysine isopeptide (Lys-Gly) (interchain with G-Cter in SUMO); alternate). A Glycyl lysine isopeptide (Lys-Gly) (interchain with G-Cter in ubiquitin); alternate cross-link involves residue lysine 388. Serine 400 carries the phosphoserine; by CDK2 modification. Residues 415 to 452 are disordered; it reads PDFPLGPPPPLPPRAPPSRPGEAAVTAAPASASVSSAS. Over residues 418–433 the composition is skewed to pro residues; the sequence is PLGPPPPLPPRAPPSR. Low complexity predominate over residues 434–452; the sequence is PGEAAVTAAPASASVSSAS. The interval 456 to 546 is AF1; mediates transcriptional activation; the sequence is STLECILYKA…VYPPYLNYLR (91 aa). Lysine 531 participates in a covalent cross-link: Glycyl lysine isopeptide (Lys-Gly) (interchain with G-Cter in SUMO). 2 consecutive NR C4-type zinc fingers follow at residues 567-587 and 603-627; these read CLICGDEASGCHYGVLTCGSC and CAGRNDCIVDKIRRKNCPACRLRKC. The segment at residues 567 to 639 is a DNA-binding region (nuclear receptor); sequence CLICGDEASG…AGMVLGGRKF (73 aa). Serine 676 is modified (phosphoserine). Positions 679–913 constitute an NR LBD domain; it reads QDIQLIPPLI…EFPEMMSEVI (235 aa). The tract at residues 687 to 933 is AF2; mediates transcriptional activation; that stretch reads LINLLMSIEP…MVKPLLFHKK (247 aa). Residue arginine 766 coordinates progesterone.

The protein belongs to the nuclear hormone receptor family. Interacts with SMARD1 and UNC45A. Interacts with CUEDC2; the interaction promotes ubiquitination, decreases sumoylation, and represses transcriptional activity. Interacts with PIAS3; the interaction promotes sumoylation of PR in a hormone-dependent manner, inhibits DNA-binding, and alters nuclear export. Interacts with SP1; the interaction requires ligand-induced phosphorylation on Ser-345 by ERK1/2-MAPK. Interacts with PRMT2. Interacts with NCOA2 and NCOA1. Interacts with KLF9. Interacts with GTF2B. In terms of processing, phosphorylated on multiple serine sites. Several of these sites are hormone-dependent. Phosphorylation on Ser-294 is highly hormone-dependent and modulates ubiquitination and sumoylation on Lys-388. Phosphorylation on Ser-102 and Ser-345 also requires induction by hormone. Basal phosphorylation on Ser-81, Ser-162, Ser-190 and Ser-400 is increased in response to progesterone and can be phosphorylated in vitro by the CDK2-A1 complex. Increased levels of phosphorylation on Ser-400 also in the presence of EGF, heregulin, IGF, PMA and FBS. Phosphorylation at this site by CDK2 is ligand-independent, and increases nuclear translocation and transcriptional activity. Phosphorylation at Ser-162 and Ser-294, but not at Ser-190, is impaired during the G(2)/M phase of the cell cycle. Phosphorylation on Ser-345 by ERK1/2 MAPK is required for interaction with SP1. Post-translationally, sumoylation is hormone-dependent and represses transcriptional activity. Sumoylation on all three sites is enhanced by PIAS3. Desumoylated by SENP1. Sumoylation on Lys-388, the main site of sumoylation, is repressed by ubiquitination on the same site, and modulated by phosphorylation at Ser-294. Ubiquitination is hormone-dependent and represses sumoylation on the same site. Promoted by MAPK-mediated phosphorylation on Ser-294. Ubiquitinated by UBR5, leading to its degradation: UBR5 specifically recognizes and binds ligand-bound PGR when it is not associated with coactivators (NCOAs). In presence of NCOAs, the UBR5-degron is not accessible, preventing its ubiquitination and degradation. In terms of processing, palmitoylated by ZDHHC7 and ZDHHC21. Palmitoylation is required for plasma membrane targeting and for rapid intracellular signaling via ERK and AKT kinases and cAMP generation.

The protein resides in the nucleus. It is found in the cytoplasm. Its function is as follows. The steroid hormones and their receptors are involved in the regulation of eukaryotic gene expression and affect cellular proliferation and differentiation in target tissues. Transcriptional activator of several progesteron-dependent promoters in a variety of cell types. Involved in activation of SRC-dependent MAPK signaling on hormone stimulation. In Gorilla gorilla gorilla (Western lowland gorilla), this protein is Progesterone receptor (PGR).